We begin with the raw amino-acid sequence, 222 residues long: Large ribosomal subunit protein bL20 (222 aa).

The protein belongs to the bacterial ribosomal protein bL20 family.

Binds directly to 23S ribosomal RNA and is necessary for the in vitro assembly process of the 50S ribosomal subunit. It is not involved in the protein synthesizing functions of that subunit. This chain is Large ribosomal subunit protein bL20 (rplT), found in Paenarthrobacter aurescens (strain TC1).